The sequence spans 131 residues: Superoxide dismutase [Ni] (131 aa).

The propeptide occupies 1–14 (MLSRLFAPKVTVSA). Residues histidine 15, cysteine 16, and cysteine 20 each contribute to the Ni(2+) site.

This sequence belongs to the nickel superoxide dismutase family. As to quaternary structure, homohexamer. The hexameric protein has a roughly the shape of a hollow sphere with an outer diameter of 60 angstroms and a large interior cavity. The cofactor is Ni(2+).

The protein resides in the cytoplasm. It carries out the reaction 2 superoxide + 2 H(+) = H2O2 + O2. This Streptomyces coelicolor (strain ATCC BAA-471 / A3(2) / M145) protein is Superoxide dismutase [Ni] (sodN).